We begin with the raw amino-acid sequence, 226 residues long: Leucyl/phenylalanyl-tRNA--protein transferase (226 aa).

Belongs to the L/F-transferase family.

It is found in the cytoplasm. The catalysed reaction is N-terminal L-lysyl-[protein] + L-leucyl-tRNA(Leu) = N-terminal L-leucyl-L-lysyl-[protein] + tRNA(Leu) + H(+). The enzyme catalyses N-terminal L-arginyl-[protein] + L-leucyl-tRNA(Leu) = N-terminal L-leucyl-L-arginyl-[protein] + tRNA(Leu) + H(+). It carries out the reaction L-phenylalanyl-tRNA(Phe) + an N-terminal L-alpha-aminoacyl-[protein] = an N-terminal L-phenylalanyl-L-alpha-aminoacyl-[protein] + tRNA(Phe). In terms of biological role, functions in the N-end rule pathway of protein degradation where it conjugates Leu, Phe and, less efficiently, Met from aminoacyl-tRNAs to the N-termini of proteins containing an N-terminal arginine or lysine. The sequence is that of Leucyl/phenylalanyl-tRNA--protein transferase from Pseudomonas putida (strain W619).